The sequence spans 78 residues: Acyl carrier protein (78 aa).

The Carrier domain occupies 2 to 77; that stretch reads SDSAEKVKKI…DAIDYIEANK (76 aa). O-(pantetheine 4'-phosphoryl)serine is present on Ser37.

This sequence belongs to the acyl carrier protein (ACP) family. Post-translationally, 4'-phosphopantetheine is transferred from CoA to a specific serine of apo-ACP by AcpS. This modification is essential for activity because fatty acids are bound in thioester linkage to the sulfhydryl of the prosthetic group.

The protein resides in the cytoplasm. Its pathway is lipid metabolism; fatty acid biosynthesis. Functionally, carrier of the growing fatty acid chain in fatty acid biosynthesis. This Sphingopyxis alaskensis (strain DSM 13593 / LMG 18877 / RB2256) (Sphingomonas alaskensis) protein is Acyl carrier protein.